Here is a 398-residue protein sequence, read N- to C-terminus: MSHKLVLVLNCGSSSLKFAVIDALTGDDQISGLAECFGLEDSRIKWKVNGQKSEASLGAFTAHREAVEYIVNDILGAHPEIAAEIQAIGHRVVHGGEKFTRSVIIDESVIHGIEDCATLAPLHNPAHLIGIRAAQASFPALPQVAVFDTAFHQTMPEKAYIYALPYKLYRENAIRRYGMHGTSHLFISREAAAALGKDEADTNIICAHLGNGASVTAIKGGKSVDTSMGLTPLEGLVMGTRCGDLDPSVIFHLVNRLGYTLDEVESVLNKQSGLLGISELTNDCRGIEEGFGSGHKGATLALEIFCYRLAKYIASYTVPLERLDAVVFTGGIGENSDLIREKVLNSLAIFNFNVDKERNAAARFGNGGQITTDEGTVAMVIPTNEEWVIAQDAIELIK.

N10 contacts Mg(2+). K17 is an ATP binding site. R91 lines the substrate pocket. The active-site Proton donor/acceptor is the D148. ATP is bound by residues 208–212, 283–285, and 331–335; these read HLGNG, DCR, and GIGEN. E385 is a binding site for Mg(2+).

Belongs to the acetokinase family. Homodimer. Mg(2+) is required as a cofactor. It depends on Mn(2+) as a cofactor.

It is found in the cytoplasm. The catalysed reaction is acetate + ATP = acetyl phosphate + ADP. Its pathway is metabolic intermediate biosynthesis; acetyl-CoA biosynthesis; acetyl-CoA from acetate: step 1/2. Its function is as follows. Catalyzes the formation of acetyl phosphate from acetate and ATP. Can also catalyze the reverse reaction. In Shewanella pealeana (strain ATCC 700345 / ANG-SQ1), this protein is Acetate kinase.